A 315-amino-acid polypeptide reads, in one-letter code: Ribosomal RNA small subunit methyltransferase H (315 aa).

S-adenosyl-L-methionine is bound by residues 35-37 (GGH), Asp55, Phe79, Asp101, and Gln108.

Belongs to the methyltransferase superfamily. RsmH family.

It localises to the cytoplasm. The enzyme catalyses cytidine(1402) in 16S rRNA + S-adenosyl-L-methionine = N(4)-methylcytidine(1402) in 16S rRNA + S-adenosyl-L-homocysteine + H(+). Specifically methylates the N4 position of cytidine in position 1402 (C1402) of 16S rRNA. The sequence is that of Ribosomal RNA small subunit methyltransferase H from Photobacterium profundum (strain SS9).